The primary structure comprises 510 residues: DNA-directed RNA polymerase I subunit RPA34 (510 aa).

N-acetylmethionine is present on Met-1. Residues 1–31 form a disordered region; sequence MEEPQAGDAARFSCPPNFTAKPPASESPRFS. Position 27 is a phosphoserine (Ser-27). A Phosphotyrosine modification is found at Tyr-80. Residues 120–143 are disordered; the sequence is GPQQSLSGSPLQPIPASPPPQIPP. A phosphoserine mark is found at Ser-128, Ser-136, Ser-172, and Ser-205. Residues 131–143 show a composition bias toward pro residues; that stretch reads QPIPASPPPQIPP. The tract at residues 203–510 is disordered; it reads LGSPEMDVRK…KRKQQQQQPV (308 aa). The span at 258–270 shows a compositional bias: basic and acidic residues; that stretch reads GKETFEPEDKTVK. Residue Lys-270 forms a Glycyl lysine isopeptide (Lys-Gly) (interchain with G-Cter in SUMO1); alternate linkage. Residue Lys-270 forms a Glycyl lysine isopeptide (Lys-Gly) (interchain with G-Cter in SUMO2); alternate linkage. Ser-285 carries the post-translational modification Phosphoserine. A Phosphothreonine modification is found at Thr-287. Ser-309 bears the Phosphoserine mark. Lys-314 participates in a covalent cross-link: Glycyl lysine isopeptide (Lys-Gly) (interchain with G-Cter in SUMO1); alternate. Lys-314 participates in a covalent cross-link: Glycyl lysine isopeptide (Lys-Gly) (interchain with G-Cter in SUMO2); alternate. 2 stretches are compositionally biased toward low complexity: residues 372-382 and 394-407; these read AKPQAQAALAA and DATV…VGPE. Residues 421–430 are compositionally biased toward basic residues; the sequence is TKKKKKKKER. Residues 436–452 show a composition bias toward low complexity; it reads EPIQPLEPELPGEGQPE. Ser-490 carries the phosphoserine modification.

The protein belongs to the eukaryotic RPA34 RNA polymerase subunit family. As to quaternary structure, component of the RNA polymerase I (Pol I) complex consisting of 13 subunits: a ten-subunit catalytic core composed of POLR1A/RPA1, POLR1B/RPA2, POLR1C/RPAC1, POLR1D/RPAC2, POLR1H/RPA12, POLR2E/RPABC1, POLR2F/RPABC2, POLR2H/RPABC3, POLR2K/RPABC4 and POLR2L/RPABC5; a mobile stalk subunit POLR1F/RPA43 protruding from the core and additional subunits homologous to general transcription factors POLR1E/RPA49 and POLR1G/RPA34. Forms a heterodimer with POLR1E/RPA49. Part of Pol I pre-initiation complex (PIC), in which Pol I core assembles with RRN3 and promoter-bound UTBF and SL1/TIF-IB complex. Interacts with TAF1A thereby associates with the SL1/TIF-IB complex. Interacts with UBTF. Interacts with POLR1E/PRAF1 through its N-terminal region. Interacts with CD3E. Post-translationally, undergoes tyrosine phosphorylation upon T-cell receptor (TCR) stimulation. This phosphorylation has not been confirmed by other groups. Phosphorylated on tyrosine residues in initiation-competent Pol I-beta complexes but not in Pol I-alpha complexes.

The protein localises to the nucleus. It localises to the nucleolus. Its subcellular location is the chromosome. Functionally, component of RNA polymerase I (Pol I), a DNA-dependent RNA polymerase which synthesizes ribosomal RNA precursors using the four ribonucleoside triphosphates as substrates. Involved in UBTF-activated transcription, presumably at a step following PIC formation. In terms of biological role, has been described as a component of preformed T-cell receptor (TCR) complex. The protein is DNA-directed RNA polymerase I subunit RPA34 of Homo sapiens (Human).